The primary structure comprises 350 residues: Anthranilate phosphoribosyltransferase (350 aa).

5-phospho-alpha-D-ribose 1-diphosphate-binding positions include Gly94, 97–98, Thr102, 104–107, 122–130, and Ser134; these read GS, NVST, and KHGNRSVSS. Residue Gly94 coordinates anthranilate. Ser106 is a Mg(2+) binding site. Residue Asn125 participates in anthranilate binding. Arg180 contributes to the anthranilate binding site. Mg(2+) is bound by residues Asp239 and Glu240.

It belongs to the anthranilate phosphoribosyltransferase family. In terms of assembly, homodimer. Mg(2+) is required as a cofactor.

It catalyses the reaction N-(5-phospho-beta-D-ribosyl)anthranilate + diphosphate = 5-phospho-alpha-D-ribose 1-diphosphate + anthranilate. Its pathway is amino-acid biosynthesis; L-tryptophan biosynthesis; L-tryptophan from chorismate: step 2/5. Its function is as follows. Catalyzes the transfer of the phosphoribosyl group of 5-phosphorylribose-1-pyrophosphate (PRPP) to anthranilate to yield N-(5'-phosphoribosyl)-anthranilate (PRA). This is Anthranilate phosphoribosyltransferase from Geotalea uraniireducens (strain Rf4) (Geobacter uraniireducens).